Reading from the N-terminus, the 212-residue chain is Thiamine-phosphate synthase (212 aa).

4-amino-2-methyl-5-(diphosphooxymethyl)pyrimidine is bound by residues 39–43 (QLRIK) and asparagine 71. Mg(2+) is bound by residues aspartate 72 and aspartate 91. 4-amino-2-methyl-5-(diphosphooxymethyl)pyrimidine is bound at residue serine 110. 136-138 (TQT) is a 2-[(2R,5Z)-2-carboxy-4-methylthiazol-5(2H)-ylidene]ethyl phosphate binding site. Lysine 139 contacts 4-amino-2-methyl-5-(diphosphooxymethyl)pyrimidine. 2-[(2R,5Z)-2-carboxy-4-methylthiazol-5(2H)-ylidene]ethyl phosphate is bound by residues glycine 168 and 188-189 (VS).

This sequence belongs to the thiamine-phosphate synthase family. Requires Mg(2+) as cofactor.

It catalyses the reaction 2-[(2R,5Z)-2-carboxy-4-methylthiazol-5(2H)-ylidene]ethyl phosphate + 4-amino-2-methyl-5-(diphosphooxymethyl)pyrimidine + 2 H(+) = thiamine phosphate + CO2 + diphosphate. It carries out the reaction 2-(2-carboxy-4-methylthiazol-5-yl)ethyl phosphate + 4-amino-2-methyl-5-(diphosphooxymethyl)pyrimidine + 2 H(+) = thiamine phosphate + CO2 + diphosphate. The catalysed reaction is 4-methyl-5-(2-phosphooxyethyl)-thiazole + 4-amino-2-methyl-5-(diphosphooxymethyl)pyrimidine + H(+) = thiamine phosphate + diphosphate. The protein operates within cofactor biosynthesis; thiamine diphosphate biosynthesis; thiamine phosphate from 4-amino-2-methyl-5-diphosphomethylpyrimidine and 4-methyl-5-(2-phosphoethyl)-thiazole: step 1/1. Functionally, condenses 4-methyl-5-(beta-hydroxyethyl)thiazole monophosphate (THZ-P) and 2-methyl-4-amino-5-hydroxymethyl pyrimidine pyrophosphate (HMP-PP) to form thiamine monophosphate (TMP). The protein is Thiamine-phosphate synthase of Serratia proteamaculans (strain 568).